The following is a 134-amino-acid chain: UPF0412 protein YaaI (134 aa).

The N-terminal stretch at 1–23 (MKSVFTLSASLAISLLLCCTAQA) is a signal peptide.

Belongs to the UPF0412 family.

The protein is UPF0412 protein YaaI of Escherichia coli O7:K1 (strain IAI39 / ExPEC).